The sequence spans 148 residues: uncharacterized protein (148 aa).

A signal peptide spans 1–22; sequence MVQTVLNSVWLWRSVLLRLTFS.

This is an uncharacterized protein from Saccharomyces cerevisiae (strain ATCC 204508 / S288c) (Baker's yeast).